A 92-amino-acid chain; its full sequence is Probable K(+)/H(+) antiporter subunit F (92 aa).

A run of 3 helical transmembrane segments spans residues 4-24 (AVVW…AFAL), 36-56 (RILG…TFGI), and 62-82 (VYFE…IALA).

Belongs to the CPA3 antiporters (TC 2.A.63) subunit F family. In terms of assembly, may form a hetero-oligomeric complex that consists of six subunits: PhaAB, PhaC, PhaD, PhaE, PhaF and PhaG.

The protein resides in the cell membrane. Its function is as follows. Part of a K(+) efflux system which is required for the adaptation of R.meliloti to alkaline pH as well as for the infection process during symbiotic nodule development. The chain is Probable K(+)/H(+) antiporter subunit F (phaF) from Rhizobium meliloti (strain 1021) (Ensifer meliloti).